The sequence spans 365 residues: Fructose-1,6-bisphosphatase class 1 2 (365 aa).

Residues Glu100, Asp122, Leu124, and Asp125 each coordinate Mg(2+). Substrate contacts are provided by residues 125–128 (DGSS) and Asn221. Mg(2+) is bound at residue Glu293.

It belongs to the FBPase class 1 family. As to quaternary structure, homotetramer. Mg(2+) serves as cofactor.

The protein localises to the cytoplasm. It catalyses the reaction beta-D-fructose 1,6-bisphosphate + H2O = beta-D-fructose 6-phosphate + phosphate. It participates in carbohydrate biosynthesis; gluconeogenesis. The chain is Fructose-1,6-bisphosphatase class 1 2 from Cupriavidus metallidurans (strain ATCC 43123 / DSM 2839 / NBRC 102507 / CH34) (Ralstonia metallidurans).